We begin with the raw amino-acid sequence, 513 residues long: Pantetheinase (513 aa).

The first 21 residues, 1 to 21 (MTTQLPAYVAILLFYVSRASC), serve as a signal peptide directing secretion. Residue asparagine 38 is glycosylated (N-linked (GlcNAc...) asparagine). Residues 39–306 (ATLTPVSREE…GKLLLSQLDS (268 aa)) enclose the CN hydrolase domain. Glutamate 79 acts as the Proton acceptor in catalysis. Asparagine 130 carries N-linked (GlcNAc...) asparagine glycosylation. Lysine 178 functions as the Proton donor in the catalytic mechanism. Residue asparagine 200 is glycosylated (N-linked (GlcNAc...) asparagine). The active-site Nucleophile is cysteine 211. N-linked (GlcNAc...) asparagine glycans are attached at residues asparagine 283, asparagine 315, and asparagine 353. Residue glycine 491 is the site of GPI-anchor amidated glycine attachment. The propeptide at 492-513 (LTAQARIIMLIVIAPIVCSLSW) is removed in mature form.

It belongs to the carbon-nitrogen hydrolase superfamily. BTD/VNN family. In terms of assembly, monomer. As to expression, widely expressed with higher expression in spleen, kidney and blood. Overexpressed in lesional psoriatic skin.

Its subcellular location is the cell membrane. It carries out the reaction (R)-pantetheine + H2O = cysteamine + (R)-pantothenate. Functionally, amidohydrolase that hydrolyzes specifically one of the carboamide linkages in D-pantetheine thus recycling pantothenic acid (vitamin B5) and releasing cysteamine. The polypeptide is Pantetheinase (VNN1) (Homo sapiens (Human)).